Here is a 111-residue protein sequence, read N- to C-terminus: Universal stress protein B (111 aa).

Transmembrane regions (helical) follow at residues 1 to 21 (MISTVALFWALCVVCVINMAR) and 90 to 110 (FILTSALCGLVMVSLVGLILW).

Belongs to the universal stress protein B family.

The protein localises to the cell inner membrane. The sequence is that of Universal stress protein B from Yersinia enterocolitica serotype O:8 / biotype 1B (strain NCTC 13174 / 8081).